A 251-amino-acid polypeptide reads, in one-letter code: Appressoria-specific virulence factor GAS1 (251 aa).

The first 21 residues, 1 to 21, serve as a signal peptide directing secretion; that stretch reads MSLKSLIAATILAAPLVAGHG. A disordered region spans residues 40–76; that stretch reads VTSTPRDGTRRDPFQQDSTRFKGQQADTFGETVGGGQ. The segment covering 54 to 66 has biased composition (polar residues); that stretch reads QQDSTRFKGQQAD.

It localises to the cytoplasm. In terms of biological role, appressoria-specific virulence factor required for appressorial penetration in host and lesion development. This is Appressoria-specific virulence factor GAS1 from Pyricularia oryzae (strain 70-15 / ATCC MYA-4617 / FGSC 8958) (Rice blast fungus).